Consider the following 694-residue polypeptide: Putative serine/threonine-protein kinase R679 (694 aa).

Positions 167-548 constitute a Protein kinase domain; it reads ITKNKTVGKG…ITNILKHLFT (382 aa). Residues 173–181 and Lys-196 contribute to the ATP site; that span reads VGKGAAGIA. The active-site Proton acceptor is Asp-395.

This sequence belongs to the protein kinase superfamily. Ser/Thr protein kinase family.

It is found in the virion. The catalysed reaction is L-seryl-[protein] + ATP = O-phospho-L-seryl-[protein] + ADP + H(+). The enzyme catalyses L-threonyl-[protein] + ATP = O-phospho-L-threonyl-[protein] + ADP + H(+). The protein is Putative serine/threonine-protein kinase R679 of Acanthamoeba polyphaga (Amoeba).